The sequence spans 174 residues: Small ribosomal subunit protein uS5 (174 aa).

The 64-residue stretch at 16 to 79 (FSELIVSVRR…NAAKKNMIRV (64 aa)) folds into the S5 DRBM domain.

This sequence belongs to the universal ribosomal protein uS5 family. Part of the 30S ribosomal subunit. Contacts proteins S4 and S8.

In terms of biological role, with S4 and S12 plays an important role in translational accuracy. Its function is as follows. Located at the back of the 30S subunit body where it stabilizes the conformation of the head with respect to the body. The sequence is that of Small ribosomal subunit protein uS5 from Ehrlichia canis (strain Jake).